The following is a 200-amino-acid chain: Endoribonuclease YbeY (200 aa).

A compositionally biased stretch (pro residues) spans 1 to 18 (MPADPALPDPVPPGPTAP). Residues 1 to 22 (MPADPALPDPVPPGPTAPVPTD) form a disordered region. Residues H151, H155, and H161 each contribute to the Zn(2+) site.

It belongs to the endoribonuclease YbeY family. Zn(2+) serves as cofactor.

The protein resides in the cytoplasm. In terms of biological role, single strand-specific metallo-endoribonuclease involved in late-stage 70S ribosome quality control and in maturation of the 3' terminus of the 16S rRNA. This is Endoribonuclease YbeY from Rhodospirillum rubrum (strain ATCC 11170 / ATH 1.1.1 / DSM 467 / LMG 4362 / NCIMB 8255 / S1).